An 807-amino-acid polypeptide reads, in one-letter code: Probable E3 ubiquitin-protein ligase mug30 (807 aa).

The region spanning 453 to 807 (RNKDFRKALK…LLETNGFNIR (355 aa)) is the HECT domain. Cys-775 acts as the Glycyl thioester intermediate in catalysis.

The protein localises to the cytoplasm. It is found in the cytoskeleton. Its subcellular location is the microtubule organizing center. The protein resides in the spindle pole body. The enzyme catalyses S-ubiquitinyl-[E2 ubiquitin-conjugating enzyme]-L-cysteine + [acceptor protein]-L-lysine = [E2 ubiquitin-conjugating enzyme]-L-cysteine + N(6)-ubiquitinyl-[acceptor protein]-L-lysine.. Its pathway is protein modification; protein ubiquitination. Its function is as follows. Probable E3 ubiquitin-protein ligase. Has a role in meiosis. This is Probable E3 ubiquitin-protein ligase mug30 (mug30) from Schizosaccharomyces pombe (strain 972 / ATCC 24843) (Fission yeast).